The chain runs to 645 residues: MTDTKTPTLDRVAGPADLRSMSDTELRNVADELRAEVVEAVSQTGGHLGSSLGVVELSVAIHAVFDTPRDKLVWDVGHQCYPHKILTGRRKQMPTLRQGGGISGFTKRSESEYDPFGAAHSSTSISAALGFTISRDMGQPTGDAVAVIGDGSISAGMAYEAMNNAGHEGRRMFVILNDNEMSIAPPVGAMSSYLSSLSELSRAGPFGGLVAIAEGMEQLAPKPVRDGARRARELVTGLENRGTFFEELGFDYIGPIDGHDMAQLLSVLRGAKARATGPVLIHCCTVKGKGYAPAEGSADKYHGVSKFDVGTGVQAKAKANAPSYTAVFGDALTTLAEEDPSVVAVTAAMPSGTGVDRMAKRFPNRVFDVGIAEQHGVTFAAAMAATGLKPFCAIYSTFLQRGYDQIVHDVALQGLPVRFAIDRAGLVGADGATHAGSFDIGYLGALPGMVVMAAADEAELVHMVATAGAHNDGPIAFRYPRGNGTGVPLPETGRVLEIGKGRMIREGDGEVAILSLGTLLSDCEAAARILEAEGINATIADARFAKPLDMALIANLVQTHKALITVEQGAMAGFGAMVLQSMAAEGLLDLGCKVRTMCLPDRFIDQAAPAEMYRDAGLDTMGIVEQVTRVLGRDLKVVTLNAKRR.

Residues 1-20 (MTDTKTPTLDRVAGPADLRS) form a disordered region. Thiamine diphosphate contacts are provided by residues His-78 and 119 to 121 (AHS). Residue Asp-150 participates in Mg(2+) binding. Thiamine diphosphate-binding positions include 151–152 (GS), Asn-179, Tyr-291, and Glu-373. Residue Asn-179 participates in Mg(2+) binding.

The protein belongs to the transketolase family. DXPS subfamily. Homodimer. Mg(2+) serves as cofactor. The cofactor is thiamine diphosphate.

It catalyses the reaction D-glyceraldehyde 3-phosphate + pyruvate + H(+) = 1-deoxy-D-xylulose 5-phosphate + CO2. Its pathway is metabolic intermediate biosynthesis; 1-deoxy-D-xylulose 5-phosphate biosynthesis; 1-deoxy-D-xylulose 5-phosphate from D-glyceraldehyde 3-phosphate and pyruvate: step 1/1. Functionally, catalyzes the acyloin condensation reaction between C atoms 2 and 3 of pyruvate and glyceraldehyde 3-phosphate to yield 1-deoxy-D-xylulose-5-phosphate (DXP). In Roseobacter denitrificans (strain ATCC 33942 / OCh 114) (Erythrobacter sp. (strain OCh 114)), this protein is 1-deoxy-D-xylulose-5-phosphate synthase 1.